Consider the following 37-residue polypeptide: Large ribosomal subunit protein bL36 (37 aa).

It belongs to the bacterial ribosomal protein bL36 family.

In Halorhodospira halophila (strain DSM 244 / SL1) (Ectothiorhodospira halophila (strain DSM 244 / SL1)), this protein is Large ribosomal subunit protein bL36.